The following is a 355-amino-acid chain: Ubiquinone biosynthesis protein COQ4 homolog, mitochondrial (355 aa).

4 residues coordinate Zn(2+): His-134, Asp-135, His-138, and Glu-150.

Belongs to the COQ4 family. As to quaternary structure, component of a multi-subunit COQ enzyme complex. It depends on Zn(2+) as a cofactor.

It is found in the mitochondrion inner membrane. It catalyses the reaction a 4-hydroxy-3-methoxy-5-(all-trans-polyprenyl)benzoate + H(+) = a 2-methoxy-6-(all-trans-polyprenyl)phenol + CO2. It participates in cofactor biosynthesis; ubiquinone biosynthesis. In terms of biological role, lyase that catalyzes the C1-decarboxylation of 4-hydroxy-3-methoxy-5-(all-trans-polyprenyl)benzoic acid into 2-methoxy-6-(all-trans-polyprenyl)phenol during ubiquinone biosynthesis. The sequence is that of Ubiquinone biosynthesis protein COQ4 homolog, mitochondrial from Plasmodium vivax (strain Salvador I).